The primary structure comprises 399 residues: Tryptophan synthase beta chain (399 aa).

The residue at position 92 (Lys-92) is an N6-(pyridoxal phosphate)lysine.

Belongs to the TrpB family. Tetramer of two alpha and two beta chains. Requires pyridoxal 5'-phosphate as cofactor.

It catalyses the reaction (1S,2R)-1-C-(indol-3-yl)glycerol 3-phosphate + L-serine = D-glyceraldehyde 3-phosphate + L-tryptophan + H2O. The protein operates within amino-acid biosynthesis; L-tryptophan biosynthesis; L-tryptophan from chorismate: step 5/5. In terms of biological role, the beta subunit is responsible for the synthesis of L-tryptophan from indole and L-serine. In Bordetella petrii (strain ATCC BAA-461 / DSM 12804 / CCUG 43448), this protein is Tryptophan synthase beta chain.